The chain runs to 255 residues: 3-deoxy-manno-octulosonate cytidylyltransferase (255 aa).

This sequence belongs to the KdsB family.

The protein localises to the cytoplasm. The catalysed reaction is 3-deoxy-alpha-D-manno-oct-2-ulosonate + CTP = CMP-3-deoxy-beta-D-manno-octulosonate + diphosphate. It functions in the pathway nucleotide-sugar biosynthesis; CMP-3-deoxy-D-manno-octulosonate biosynthesis; CMP-3-deoxy-D-manno-octulosonate from 3-deoxy-D-manno-octulosonate and CTP: step 1/1. It participates in bacterial outer membrane biogenesis; lipopolysaccharide biosynthesis. Its function is as follows. Activates KDO (a required 8-carbon sugar) for incorporation into bacterial lipopolysaccharide in Gram-negative bacteria. The protein is 3-deoxy-manno-octulosonate cytidylyltransferase of Thermodesulfovibrio yellowstonii (strain ATCC 51303 / DSM 11347 / YP87).